The following is a 642-amino-acid chain: Mini-chromosome maintenance complex-binding protein (642 aa).

The span at Ala151–Pro161 shows a compositional bias: polar residues. The tract at residues Ala151–Gly196 is disordered. A Phosphoserine modification is found at Ser154. Position 160 is a phosphothreonine (Thr160). Phosphoserine occurs at positions 167 and 298.

Belongs to the MCMBP family. In terms of assembly, interacts with the MCM complex: associates with the MCM3-7 complex which lacks MCM2, while it does not interact with the MCM complex when MCM2 is present (MCM2-7 complex). Interacts with the RPA complex, when composed of all RPA1, RPA2 and RPA3 components, but not with RPA1 or RPA2 alone.

It localises to the nucleus. Functionally, associated component of the MCM complex that acts as a regulator of DNA replication. Binds to the MCM complex during late S phase and promotes the disassembly of the MCM complex from chromatin, thereby acting as a key regulator of pre-replication complex (pre-RC) unloading from replicated DNA. Can dissociate the MCM complex without addition of ATP; probably acts by destabilizing interactions of each individual subunits of the MCM complex. Required for sister chromatid cohesion. In Mus musculus (Mouse), this protein is Mini-chromosome maintenance complex-binding protein (Mcmbp).